The sequence spans 368 residues: Protein-glutamate methylesterase/protein-glutamine glutaminase 2 (368 aa).

One can recognise a Response regulatory domain in the interval 6–123; the sequence is KVLLVDDSAV…KEYLESAAGE (118 aa). Aspartate 57 is modified (4-aspartylphosphate). A CheB-type methylesterase domain is found at 169–355; sequence IAGANKIAAL…SLERIPQCVL (187 aa). Residues serine 181, histidine 207, and aspartate 303 contribute to the active site.

The protein belongs to the CheB family. Phosphorylated by CheA. Phosphorylation of the N-terminal regulatory domain activates the methylesterase activity.

The protein resides in the cytoplasm. It catalyses the reaction [protein]-L-glutamate 5-O-methyl ester + H2O = L-glutamyl-[protein] + methanol + H(+). The catalysed reaction is L-glutaminyl-[protein] + H2O = L-glutamyl-[protein] + NH4(+). Involved in chemotaxis. Part of a chemotaxis signal transduction system that modulates chemotaxis in response to various stimuli. Catalyzes the demethylation of specific methylglutamate residues introduced into the chemoreceptors (methyl-accepting chemotaxis proteins or MCP) by CheR. Also mediates the irreversible deamidation of specific glutamine residues to glutamic acid. This chain is Protein-glutamate methylesterase/protein-glutamine glutaminase 2, found in Hahella chejuensis (strain KCTC 2396).